Reading from the N-terminus, the 40-residue chain is SGSKTANIGDGCFGVRLDHIGTTSGMGCGRPRPKPTPGGS.

A propeptide spanning residues 1–8 (SGSKTANI) is cleaved from the precursor. Cys12 and Cys28 are disulfide-bonded. A disordered region spans residues 20 to 40 (IGTTSGMGCGRPRPKPTPGGS).

The protein belongs to the natriuretic peptide family. Expressed by the venom gland.

It localises to the secreted. Its function is as follows. Snake venom natriuretic peptide that targets both NPR1 and NPR2. Exhibits hypotensive and vasodepressor activities. In Pseudechis porphyriacus (Red-bellied black snake), this protein is Natriuretic peptide PpNP-b.